The sequence spans 83 residues: RNA-binding protein Hfq (83 aa).

Residues 11–71 (DTFLNHVRKN…ISTIMPGHPV (61 aa)) form the Sm domain.

The protein belongs to the Hfq family. As to quaternary structure, homohexamer.

Functionally, RNA chaperone that binds small regulatory RNA (sRNAs) and mRNAs to facilitate mRNA translational regulation in response to envelope stress, environmental stress and changes in metabolite concentrations. Also binds with high specificity to tRNAs. This is RNA-binding protein Hfq from Methylobacterium radiotolerans (strain ATCC 27329 / DSM 1819 / JCM 2831 / NBRC 15690 / NCIMB 10815 / 0-1).